We begin with the raw amino-acid sequence, 273 residues long: NAD-dependent protein deacylase (273 aa).

The region spanning 1 to 269 is the Deacetylase sirtuin-type domain; it reads MNLDNAIHEA…PRIVEQVKKI (269 aa). NAD(+) is bound by residues 25-44 and 107-110; these read GAGV…GGVW and QNID. The Proton acceptor role is filled by H125. The Zn(2+) site is built by C133, C136, C173, and C176. Residues 211–213, 237–239, and T255 each bind NAD(+); these read GTS and NPN.

It belongs to the sirtuin family. Class III subfamily. Zn(2+) serves as cofactor.

The protein localises to the cytoplasm. It catalyses the reaction N(6)-acetyl-L-lysyl-[protein] + NAD(+) + H2O = 2''-O-acetyl-ADP-D-ribose + nicotinamide + L-lysyl-[protein]. Its function is as follows. NAD-dependent protein deacetylase which modulates the activities of several proteins which are inactive in their acetylated form. The sequence is that of NAD-dependent protein deacylase (cobB) from Desulfosudis oleivorans (strain DSM 6200 / JCM 39069 / Hxd3) (Desulfococcus oleovorans).